Consider the following 77-residue polypeptide: Protein UL148C (77 aa).

Helical transmembrane passes span 10–30 (VLYL…AVAV) and 35–55 (IAWA…VGAA).

The protein resides in the host membrane. This is Protein UL148C (UL148C) from Homo sapiens (Human).